The following is a 47-amino-acid chain: Large ribosomal subunit protein bL34 (47 aa).

2 stretches are compositionally biased toward basic residues: residues 1 to 22 (MAKGKRTFQPNNRRRSRVHGFR) and 36 to 47 (ARRRKGRKSLTA). The interval 1 to 47 (MAKGKRTFQPNNRRRSRVHGFRSRMSTRAGRAIVSARRRKGRKSLTA) is disordered.

It belongs to the bacterial ribosomal protein bL34 family.

The sequence is that of Large ribosomal subunit protein bL34 from Corynebacterium kroppenstedtii (strain DSM 44385 / JCM 11950 / CIP 105744 / CCUG 35717).